Reading from the N-terminus, the 195-residue chain is ATP-dependent Clp protease proteolytic subunit 2 (195 aa).

Catalysis depends on Ser98, which acts as the Nucleophile. Residue His123 is part of the active site.

The protein belongs to the peptidase S14 family. As to quaternary structure, fourteen ClpP subunits assemble into 2 heptameric rings which stack back to back to give a disk-like structure with a central cavity, resembling the structure of eukaryotic proteasomes.

The protein resides in the cytoplasm. The enzyme catalyses Hydrolysis of proteins to small peptides in the presence of ATP and magnesium. alpha-casein is the usual test substrate. In the absence of ATP, only oligopeptides shorter than five residues are hydrolyzed (such as succinyl-Leu-Tyr-|-NHMec, and Leu-Tyr-Leu-|-Tyr-Trp, in which cleavage of the -Tyr-|-Leu- and -Tyr-|-Trp bonds also occurs).. Cleaves peptides in various proteins in a process that requires ATP hydrolysis. Has a chymotrypsin-like activity. Plays a major role in the degradation of misfolded proteins. The protein is ATP-dependent Clp protease proteolytic subunit 2 of Rhodopirellula baltica (strain DSM 10527 / NCIMB 13988 / SH1).